Reading from the N-terminus, the 299-residue chain is HTH-type transcriptional regulator CrgA (299 aa).

One can recognise an HTH lysR-type domain in the interval 1 to 60 (MKTNSEELTVFVQVVESGSFSRAAEQLAMANSAVSRIVKRLEEKLGVNLLNRTTRQLSLT). The H-T-H motif DNA-binding region spans 20–39 (FSRAAEQLAMANSAVSRIVK).

Belongs to the LysR transcriptional regulatory family. As to quaternary structure, forms oligomers. Forms an octomeric ring-like structure in solution. May form hexadecamers when bound to target DNA.

Activation and repression activities are enhanced by the addition of alpha-methylene-gamma-butyrolactone (MBL), an inducer of NADPH:quinone oxidoreductase. Functionally, regulatory protein that activates transcription of mdaB, encoding a NADPH:quinone oxidoreductase, and represses its own transcription. Under the same experimental conditions, no regulation of transcription of pilus and capsule genes is detected. The polypeptide is HTH-type transcriptional regulator CrgA (Neisseria meningitidis serogroup B (strain ATCC BAA-335 / MC58)).